A 499-amino-acid polypeptide reads, in one-letter code: L-arabinose isomerase (499 aa).

Mn(2+) is bound by residues glutamate 306, glutamate 333, histidine 350, and histidine 449.

It belongs to the arabinose isomerase family. It depends on Mn(2+) as a cofactor.

The catalysed reaction is beta-L-arabinopyranose = L-ribulose. Its pathway is carbohydrate degradation; L-arabinose degradation via L-ribulose; D-xylulose 5-phosphate from L-arabinose (bacterial route): step 1/3. Functionally, catalyzes the conversion of L-arabinose to L-ribulose. This Aeromonas hydrophila subsp. hydrophila (strain ATCC 7966 / DSM 30187 / BCRC 13018 / CCUG 14551 / JCM 1027 / KCTC 2358 / NCIMB 9240 / NCTC 8049) protein is L-arabinose isomerase.